We begin with the raw amino-acid sequence, 61 residues long: Early 3 Conserved Region 1-alpha protein (61 aa).

Residues 1–14 (MSNSSNSTSLSNFS) lie on the Lumenal side of the membrane. N-linked (GlcNAc...) asparagine; by host glycans are attached at residues asparagine 3, asparagine 6, and asparagine 12. The helical transmembrane segment at 15–35 (GIGVGVILTLVILFILILALL) threads the bilayer. At 36–61 (CLRVAACCTHVCTYCQLFKRWGQHPR) the chain is on the cytoplasmic side.

Belongs to the adenoviridae E3-CR1 family. As to quaternary structure, interacts with E3 RID alpha and E3 RID beta. In terms of processing, only 1 of 3 three potential glycosylation sites is glycosylated. Oligosaccharides are not processed from high mannose to the complex type because the protein is retained in the endoplasmic reticulum.

The protein resides in the host endoplasmic reticulum membrane. The protein localises to the host cell membrane. Functionally, prevents infected cell apoptosis induced by the host immune system. May act by down-regulating host TRAIL receptors. May act in complex with E3 RID alpha and beta. May play a role on cellular apoptosis regulation in the ER. In Human adenovirus C serotype 2 (HAdV-2), this protein is Early 3 Conserved Region 1-alpha protein.